The following is a 484-amino-acid chain: Deoxyribodipyrimidine photo-lyase (484 aa).

The Photolyase/cryptochrome alpha/beta domain occupies 3–132 (APILFWHRRD…RAVQLWDQLL (130 aa)). Coenzyme F420-(gamma-Glu)n is bound by residues 36-38 (CLD), Arg51, and 101-109 (DIEPYGRDR). A DNA-binding region spans residues 141-148 (GSGNPYSV). Position 228 (Tyr228) interacts with FAD. A DNA-binding site is contributed by Arg232. Residue 240–247 (TSGLSPAL) coordinates FAD. Lys248 lines the coenzyme F420-(gamma-Glu)n pocket. Interaction with DNA stretches follow at residues 283–290 (ELAWREFY) and 349–350 (NR). FAD is bound by residues 346–352 (WMHNRCW), 380–382 (DGD), and Asn386. Gln411 and Lys472 together coordinate DNA.

Belongs to the DNA photolyase class-1 family. In terms of assembly, monomer. FAD serves as cofactor. The cofactor is coenzyme F420-(gamma-Glu)n.

It catalyses the reaction cyclobutadipyrimidine (in DNA) = 2 pyrimidine residues (in DNA).. In terms of biological role, involved in repair of UV radiation-induced DNA damage. Catalyzes the light-dependent monomerization (300-600 nm) of cyclobutyl pyrimidine dimers (in cis-syn configuration), which are formed between adjacent bases on the same DNA strand upon exposure to ultraviolet radiation. The sequence is that of Deoxyribodipyrimidine photo-lyase (phr) from Synechococcus sp. (strain ATCC 27144 / PCC 6301 / SAUG 1402/1) (Anacystis nidulans).